The primary structure comprises 537 residues: Tyrosine-protein kinase Fyn (537 aa).

Glycine 2 carries the N-myristoyl glycine lipid modification. Residues cysteine 3 and cysteine 6 are each lipidated (S-palmitoyl cysteine). Threonine 12 carries the phosphothreonine; by PKC modification. The SH3 domain maps to 82 to 143 (TGVTLFVALY…PSNYVAPVDS (62 aa)). Residues 149-246 (WYFGKLGRKD…GLCCRLVVPC (98 aa)) enclose the SH2 domain. The region spanning 271–524 (LQLIKRLGNG…YLQAFLEDYF (254 aa)) is the Protein kinase domain. Residues 277 to 285 (LGNGQFGEV) and lysine 299 each bind ATP. The active-site Proton acceptor is aspartate 390. Position 420 is a phosphotyrosine; by autocatalysis (tyrosine 420). Tyrosine 531 carries the phosphotyrosine modification.

It belongs to the protein kinase superfamily. Tyr protein kinase family. SRC subfamily. Associates through its SH3 domain, to the p85 subunit of phosphatidylinositol 3-kinase. It depends on Mn(2+) as a cofactor.

It catalyses the reaction L-tyrosyl-[protein] + ATP = O-phospho-L-tyrosyl-[protein] + ADP + H(+). With respect to regulation, inhibited by phosphorylation of Tyr-531 by leukocyte common antigen and activated by dephosphorylation of this site. Tyrosine-protein kinase implicated in the control of cell growth. Plays a role in the regulation of intracellular calcium levels. Required in brain development and mature brain function with important roles in the regulation of axon growth, axon guidance, and neurite extension. The chain is Tyrosine-protein kinase Fyn (fyn) from Xiphophorus hellerii (Green swordtail).